Here is a 138-residue protein sequence, read N- to C-terminus: Phosphoribosyl-AMP cyclohydrolase (138 aa).

D84 lines the Mg(2+) pocket. Position 85 (C85) interacts with Zn(2+). Residues D86 and D88 each contribute to the Mg(2+) site. Residues C102 and C109 each coordinate Zn(2+).

This sequence belongs to the PRA-CH family. In terms of assembly, homodimer. Mg(2+) serves as cofactor. It depends on Zn(2+) as a cofactor.

The protein localises to the cytoplasm. The enzyme catalyses 1-(5-phospho-beta-D-ribosyl)-5'-AMP + H2O = 1-(5-phospho-beta-D-ribosyl)-5-[(5-phospho-beta-D-ribosylamino)methylideneamino]imidazole-4-carboxamide. The protein operates within amino-acid biosynthesis; L-histidine biosynthesis; L-histidine from 5-phospho-alpha-D-ribose 1-diphosphate: step 3/9. Functionally, catalyzes the hydrolysis of the adenine ring of phosphoribosyl-AMP. The protein is Phosphoribosyl-AMP cyclohydrolase of Burkholderia multivorans (strain ATCC 17616 / 249).